Consider the following 376-residue polypeptide: Thymidine kinase (376 aa).

The interval 1-44 (MASYPGHQHASAFDQAARSRGHSNRRTALRPRRQQEATEVRPEQ) is disordered. A compositionally biased stretch (basic residues) spans 19-32 (SRGHSNRRTALRPR). Over residues 33 to 44 (RQQEATEVRPEQ) the composition is skewed to basic and acidic residues. 56 to 63 (GPHGMGKT) lines the ATP pocket. E83 (proton acceptor) is an active-site residue. Substrate contacts are provided by Y101 and Q125. ATP is bound at residue R216. Residue R222 participates in substrate binding. A disordered region spans residues 260-280 (GQLSGTAVPPQGAEPQSNAGP).

Belongs to the herpesviridae thymidine kinase family. Homodimer.

The catalysed reaction is thymidine + ATP = dTMP + ADP + H(+). Functionally, catalyzes the transfer of the gamma-phospho group of ATP to thymidine to generate dTMP in the salvage pathway of pyrimidine synthesis. The dTMP serves as a substrate for DNA polymerase during viral DNA replication. Allows the virus to be reactivated and to grow in non-proliferative cells lacking a high concentration of phosphorylated nucleic acid precursors. In Human herpesvirus 1 (strain SC16) (HHV-1), this protein is Thymidine kinase.